The sequence spans 83 residues: Mu-theraphotoxin-Hhn2l (83 aa).

The signal sequence occupies residues 1 to 21 (MKASMFLALAGLVLLFVVGYA). A propeptide spanning residues 22–48 (SESEEKEFPIELLSKIFAVDVFKGEER) is cleaved from the precursor. 3 cysteine pairs are disulfide-bonded: C50–C65, C57–C70, and C64–C77. L81 carries the post-translational modification Leucine amide.

It belongs to the neurotoxin 10 (Hwtx-1) family. 15 (Hntx-3) subfamily. As to quaternary structure, monomer. Expressed by the venom gland.

It is found in the secreted. Functionally, lethal neurotoxin. Selectively blocks tetrodotoxin-sensitive voltage-gated sodium channels (Nav). Does not affect tetrodotoxin-resistant voltage-gated sodium channels or calcium channels. The polypeptide is Mu-theraphotoxin-Hhn2l (Cyriopagopus hainanus (Chinese bird spider)).